The chain runs to 322 residues: MKNQYRVLLYYKYVHIDNPEQFAEDHLKFCKDLGLKGRILVAGEGINGTVSGTVEQTDRYMSEMKSDPRFEDMVFKIDESEGHAFKKMHVRHRDELVTLRLEDDIDPNELTGKYLEPKEFYEAMQQEDTIVVDARNDYEYDLGHFRGAIRPDIKAFRELPEWIRDNKEKLEGKKILTYCTGGIRCEKFSGWLKKEGFEDVSQLHGGIVTYGKDPEVQGELWDGKCYVFDERISVPVNQKEHVIVGKDYFTGEPCERYVNCANPECNKQIICSEENEHRYLRGCTHECRVHPRNLYVKEHGLSEEEVQERLEKLKEEEHAAQS.

In terms of domain architecture, Rhodanese spans 125–219 (QQEDTIVVDA…YGKDPEVQGE (95 aa)). Cys179 (cysteine persulfide intermediate) is an active-site residue.

This sequence belongs to the TrhO family.

It catalyses the reaction uridine(34) in tRNA + AH2 + O2 = 5-hydroxyuridine(34) in tRNA + A + H2O. Catalyzes oxygen-dependent 5-hydroxyuridine (ho5U) modification at position 34 in tRNAs. This is tRNA uridine(34) hydroxylase from Bacillus licheniformis (strain ATCC 14580 / DSM 13 / JCM 2505 / CCUG 7422 / NBRC 12200 / NCIMB 9375 / NCTC 10341 / NRRL NRS-1264 / Gibson 46).